We begin with the raw amino-acid sequence, 904 residues long: MAAIRALQQWCRQQCEGYRDVNICNMTTSFRDGLAFCAILHRHRPDLINFSALKKENIYENNKLAFRVAEEHLGIPALLDAEDMVALKVPDRLSILTYVSQYYNYFHGRSPIGGMAGVKRASEDSEEEPSGKKAPVQAAKLPSPAPARKPPLSPAQTNPVVQRRNEGAGGPPPKTDQALAGSLVSSTCGVCGKHVHLVQRHLADGRLYHRSCFRCKQCSCTLHSGAYKATGEPGTFVCTSHLPAAASASPKLTGLVPRQPGAMGVDSRTSCSPQKAQEANKARPSAWEPAAGNSPARASVPAAPNPAATSATSVHVRSPARPSESRLAPTPTEGKVRPRVTNSSPMGWSSAAPCTAAAASHPAVPPSAPDPRPATPQGGGAPRVAAPQTTLSSSSTSAATVDPPAWTPSASRTQQARNKFFQTSAVPPGTSLSGRGPTPSLVLSKDSSKEQARNFLKQALSALEEAGAPAPGRPSPATAAVPSSQPKTEAPQASPLAKPLQSSSPRVLGLPSRMEPPAPLSTSSTSQASALPPAGRRNLAESSGVGRVGAGSRPKPEAPMAKGKSTTLTQDMSTSLQEGQEDGPAGWRANLKPVDRRSPAERTLKPKEPRALAEPRAGEAPRKVSGSFAGSVHITLTPVRPDRTPRPASPGPSLPARSPSPPRRRRLAVPASLDVCDNWLRPEPPGQEARVQSWKEEEKKPHLQGKPGRPLSPANVPALPGETVTSPVRLHPDYLSPEEIQRQLQDIERRLDALELRGVELEKRLRAAEGDDAEDSLMVDWFWLIHEKQLLLRQESELMYKSKAQRLEEQQLDIEGELRRLMAKPEALKSLQERRREQELLEQYVSTVNDRSDIVDSLDEDRLREQEEDQMLRDMIEKLGLQRKKSKFRLSKIWSPKSKSSPSQ.

In terms of domain architecture, Calponin-homology (CH) spans 1 to 107; sequence MAAIRALQQW…YVSQYYNYFH (107 aa). The interval 1–260 is forms an intramolecular interaction with the C-terminal coiled coil domain keeping the protein in a closed conformation; sequence MAAIRALQQW…KLTGLVPRQP (260 aa). Phosphoserine is present on residues Ser-110, Ser-143, and Ser-153. Residues 117-178 form a disordered region; the sequence is GVKRASEDSE…GGPPPKTDQA (62 aa). Over residues 143–153 the composition is skewed to pro residues; the sequence is SPAPARKPPLS. The 63-residue stretch at 186–248 folds into the LIM zinc-binding domain; it reads STCGVCGKHV…TSHLPAAASA (63 aa). At Ser-249 the chain carries Phosphoserine. The tract at residues 251 to 722 is disordered; it reads KLTGLVPRQP…PANVPALPGE (472 aa). Residues 261–388 are necessary and sufficient for interaction with actinins; sequence GAMGVDSRTS…GGAPRVAAPQ (128 aa). Positions 261 to 697 are mediates targeting to the cell plasma membrane; the sequence is GAMGVDSRTS…EARVQSWKEE (437 aa). The span at 267 to 277 shows a compositional bias: polar residues; that stretch reads SRTSCSPQKAQ. Composition is skewed to low complexity over residues 293-314 and 349-362; these read NSPA…ATSV and SSAA…ASHP. Ser-294 bears the Phosphoserine mark. Over residues 363 to 374 the composition is skewed to pro residues; sequence AVPPSAPDPRPA. The span at 385-400 shows a compositional bias: low complexity; the sequence is AAPQTTLSSSSTSAAT. A compositionally biased stretch (polar residues) spans 408–433; it reads PSASRTQQARNKFFQTSAVPPGTSLS. Low complexity predominate over residues 459–480; sequence ALSALEEAGAPAPGRPSPATAA. A phosphoserine mark is found at Ser-494 and Ser-504. Composition is skewed to low complexity over residues 520-534 and 542-553; these read LSTS…LPPA and SSGVGRVGAGSR. Over residues 564–578 the composition is skewed to polar residues; sequence KSTTLTQDMSTSLQE. The segment covering 593-622 has biased composition (basic and acidic residues); it reads PVDRRSPAERTLKPKEPRALAEPRAGEAPR. Ser-598 is subject to Phosphoserine. Phosphothreonine is present on Thr-644. Pro residues predominate over residues 647 to 661; sequence PASPGPSLPARSPSP. Phosphoserine is present on residues Ser-649, Ser-658, Ser-660, and Ser-726. Residues 698-807 form a forms an intramolecular interaction with the N-terminal Calponin-homology and LIM zinc-binding domains-containing region keeping the protein in a closed conformation region; the sequence is EKKPHLQGKP…LMYKSKAQRL (110 aa). The 152-residue stretch at 723-874 folds into the bMERB domain; that stretch reads TVTSPVRLHP…EQEEDQMLRD (152 aa). Positions 735–771 form a coiled coil; that stretch reads LSPEEIQRQLQDIERRLDALELRGVELEKRLRAAEGD. Positions 807 to 903 are mediates interaction with RAB13 and is required for transition from the closed to the opened conformation; it reads LEEQQLDIEG…WSPKSKSSPS (97 aa).

In terms of assembly, interacts with RAB13 (GTP-bound form); competes with RAB8A and is involved in tight junctions assembly. Interacts with RAB8A; competes with RAB13 and is involved in E-cadherin endocytic recycling. Interacts with RAB8B. Interacts (preferentially in opened conformation) with ACTN1 and ACTN4; stimulated by RAB13 activation. Interacts (via calponin-homology (CH) domain) with the filamins FLNA, FLNB and FLNC (via actin-binding domain).

The protein localises to the cell membrane. The protein resides in the cell junction. It is found in the tight junction. Its subcellular location is the recycling endosome. It localises to the cell projection. The protein localises to the cytoplasm. The protein resides in the cytoskeleton. In terms of biological role, effector of small Rab GTPases which is involved in junctional complexes assembly through the regulation of cell adhesion molecules transport to the plasma membrane and actin cytoskeleton reorganization. Regulates the endocytic recycling of occludins, claudins and E-cadherin to the plasma membrane and may thereby regulate the establishment of tight junctions and adherens junctions. In parallel, may regulate actin cytoskeleton reorganization directly through interaction with F-actin or indirectly through actinins and filamins. Most probably involved in the processes of epithelial cell differentiation, cell spreading and neurite outgrowth. Undergoes liquid-liquid phase separation to form tubular recycling endosomes. Plays 2 sequential roles in the biogenesis of tubular recycling endosomes: first organizes phase separation and then the closed form formed by interaction with RAB8A promotes endosomal tubulation. The sequence is that of MICAL-like protein 2 from Homo sapiens (Human).